A 166-amino-acid polypeptide reads, in one-letter code: Large ribosomal subunit protein uL10 (166 aa).

It belongs to the universal ribosomal protein uL10 family. As to quaternary structure, part of the ribosomal stalk of the 50S ribosomal subunit. The N-terminus interacts with L11 and the large rRNA to form the base of the stalk. The C-terminus forms an elongated spine to which L12 dimers bind in a sequential fashion forming a multimeric L10(L12)X complex.

In terms of biological role, forms part of the ribosomal stalk, playing a central role in the interaction of the ribosome with GTP-bound translation factors. The protein is Large ribosomal subunit protein uL10 of Bacillus cereus (strain G9842).